We begin with the raw amino-acid sequence, 392 residues long: Chalcone synthase (392 aa).

The active site involves Cys-165.

Belongs to the thiolase-like superfamily. Chalcone/stilbene synthases family.

The enzyme catalyses (E)-4-coumaroyl-CoA + 3 malonyl-CoA + 3 H(+) = 2',4,4',6'-tetrahydroxychalcone + 3 CO2 + 4 CoA. It functions in the pathway secondary metabolite biosynthesis; flavonoid biosynthesis. Its function is as follows. The primary product of this enzyme is 4,2',4',6'-tetrahydroxychalcone (also termed naringenin-chalcone or chalcone) which can under specific conditions spontaneously isomerize into naringenin. This chain is Chalcone synthase (CHS), found in Persea americana (Avocado).